Here is a 211-residue protein sequence, read N- to C-terminus: Minor capsid protein VP2 (211 aa).

It belongs to the norovirus VP2 family. In terms of assembly, homooligomer. The portal-like structure consists in 12 copies of VP2. Interacts with capsid protein VP1.

The protein resides in the virion. It is found in the host cytoplasm. Functionally, minor structural protein that forms a portal-like structure at a unique three-fold axis of symmetry, following binding to the host receptor. The channel formed by VP2 may allow the delivery of the viral genome through the host endosomal membrane. This is Minor capsid protein VP2 from Homo sapiens (Human).